A 108-amino-acid polypeptide reads, in one-letter code: Large ribosomal subunit protein bL21 (108 aa).

This sequence belongs to the bacterial ribosomal protein bL21 family. As to quaternary structure, part of the 50S ribosomal subunit. Contacts protein L20.

Functionally, this protein binds to 23S rRNA in the presence of protein L20. The sequence is that of Large ribosomal subunit protein bL21 from Orientia tsutsugamushi (strain Ikeda) (Rickettsia tsutsugamushi).